The primary structure comprises 310 residues: uncharacterized protein (310 aa).

The disordered stretch occupies residues 1-70 (MAGNSQRRGA…ARGRTDETET (70 aa)). Over residues 49–62 (AAKRAKAQQRRPAR) the composition is skewed to basic residues. Residues Gly-262, Val-282, and Leu-291 each coordinate S-adenosyl-L-methionine.

It belongs to the class IV-like SAM-binding methyltransferase superfamily. RNA methyltransferase TrmH family.

This is an uncharacterized protein from Mycobacterium marinum (strain ATCC BAA-535 / M).